The chain runs to 524 residues: Serine/threonine-protein kinase PAK 2 (524 aa).

The disordered stretch occupies residues 1 to 81 (MSDNGELEDK…PEISPPSDFE (81 aa)). Ser-2 bears the N-acetylserine mark. Phosphoserine is present on residues Ser-2, Ser-20, Ser-55, and Ser-58. Thr-60 bears the Phosphothreonine mark. Lys-62 bears the N6-acetyllysine mark. The residue at position 64 (Ser-64) is a Phosphoserine. The span at 67 to 81 (KEKERPEISPPSDFE) shows a compositional bias: basic and acidic residues. The interval 69–112 (KERPEISPPSDFEHTIHVGFDAVTGEFTGMPEQWARLLQTSNIT) is GTPase-binding. The segment at 69-137 (KERPEISPPS…KFYDSNTVKQ (69 aa)) is autoregulatory region. Residues 74 to 87 (ISPPSDFEHTIHVG) enclose the CRIB domain. Residues 88-248 (FDAVTGEFTG…IVSIGDPKKK (161 aa)) form a linker region. Lys-128 carries the post-translational modification N6-acetyllysine. Thr-134 bears the Phosphothreonine mark. A Phosphotyrosine modification is found at Tyr-139. Ser-141 is subject to Phosphoserine. Thr-143 carries the post-translational modification Phosphothreonine. A Phosphoserine modification is found at Ser-152. Thr-159 and Thr-169 each carry phosphothreonine. Positions 169 to 178 (TEEDDDDEEA) are enriched in acidic residues. Residues 169–188 (TEEDDDDEEAAPPVIAPRPD) are disordered. Ser-197 is subject to Phosphoserine. Positions 204–228 (APVGDSHVDSGAKSSDKQKKKTKMT) are disordered. Residues 209–228 (SHVDSGAKSSDKQKKKTKMT) are compositionally biased toward basic and acidic residues. The Nuclear localization signal signature appears at 245–251 (PKKKYTR). Positions 249-500 (YTRYEKIGQG…AKELLQHPFL (252 aa)) constitute a Protein kinase domain. Residues 255–263 (IGQGASGTV) and Lys-278 contribute to the ATP site. Asp-368 functions as the Proton acceptor in the catalytic mechanism. Phosphothreonine; by autocatalysis is present on Thr-402.

In terms of assembly, interacts tightly with GTP-bound but not GDP-bound CDC42/p21 and RAC1. Interacts with SH3MD4. Interacts with SCRIB. Interacts with ARHGEF7 and GIT1. PAK-2p34 interacts with ARHGAP10. Interacts with RAC1. Post-translationally, full-length PAK2 is autophosphorylated when activated by CDC42/p21. Following cleavage, both peptides, PAK-2p27 and PAK-2p34, become highly autophosphorylated. Autophosphorylation of PAK-2p27 can occur in the absence of any effectors and is dependent on phosphorylation of Thr-402, because PAK-2p27 is acting as an exogenous substrate. During apoptosis proteolytically cleaved by caspase-3 or caspase-3-like proteases to yield active PAK-2p34. In terms of processing, ubiquitinated, leading to its proteasomal degradation.

It localises to the cytoplasm. The protein localises to the nucleus. Its subcellular location is the perinuclear region. It is found in the membrane. The enzyme catalyses L-seryl-[protein] + ATP = O-phospho-L-seryl-[protein] + ADP + H(+). It carries out the reaction L-threonyl-[protein] + ATP = O-phospho-L-threonyl-[protein] + ADP + H(+). Activated by binding small G proteins. Binding of GTP-bound CDC42 or RAC1 to the autoregulatory region releases monomers from the autoinhibited dimer, enables phosphorylation of Thr-402 and allows the kinase domain to adopt an active structure. Following caspase cleavage, autophosphorylated PAK-2p34 is constitutively active. Functionally, serine/threonine protein kinase that plays a role in a variety of different signaling pathways including cytoskeleton regulation, cell motility, cell cycle progression, apoptosis or proliferation. Acts as a downstream effector of the small GTPases CDC42 and RAC1. Activation by the binding of active CDC42 and RAC1 results in a conformational change and a subsequent autophosphorylation on several serine and/or threonine residues. Full-length PAK2 stimulates cell survival and cell growth. Phosphorylates MAPK4 and MAPK6 and activates the downstream target MAPKAPK5, a regulator of F-actin polymerization and cell migration. Phosphorylates JUN and plays an important role in EGF-induced cell proliferation. Phosphorylates many other substrates including histone H4 to promote assembly of H3.3 and H4 into nucleosomes, BAD, ribosomal protein S6, or MBP. Phosphorylates CASP7, thereby preventing its activity. Additionally, associates with ARHGEF7 and GIT1 to perform kinase-independent functions such as spindle orientation control during mitosis. On the other hand, apoptotic stimuli such as DNA damage lead to caspase-mediated cleavage of PAK2, generating PAK-2p34, an active p34 fragment that translocates to the nucleus and promotes cellular apoptosis involving the JNK signaling pathway. Caspase-activated PAK2 phosphorylates MKNK1 and reduces cellular translation. This is Serine/threonine-protein kinase PAK 2 (PAK2) from Oryctolagus cuniculus (Rabbit).